Here is a 389-residue protein sequence, read N- to C-terminus: Cytochrome oxidase assembly protein SHY1 (389 aa).

The Mitochondrial matrix segment spans residues 1 to 71 (MSLLGARSTY…SRRERSFGKK (71 aa)). A helical membrane pass occupies residues 72-92 (IVLGLMFAMPIISFYLGTWQV). Topologically, residues 93–341 (RRLKWKTKLI…KPTIDLKNNH (249 aa)) are mitochondrial intermembrane. Residues 292-311 (GTQAVDNNTSKPRSRQEMPT) are disordered. A helical membrane pass occupies residues 342-362 (LQYLVTWYGLSFLSTIFLIVA). Residues 363-389 (LRKAKRGGVVSQDQLMKEKLKHSRKYM) lie on the Mitochondrial matrix side of the membrane.

It belongs to the SURF1 family. In terms of assembly, interacts with COA1, COX14 and MSS51.

Its subcellular location is the mitochondrion inner membrane. Its function is as follows. Required for efficient assembly of cytochrome c oxidase in the mitochondrial inner membrane. Involved in a step that couples MSS51-COX14-dependent regulation of COX1 translation to early steps of cytochrome c oxidase assembly. In Saccharomyces cerevisiae (strain ATCC 204508 / S288c) (Baker's yeast), this protein is Cytochrome oxidase assembly protein SHY1 (SHY1).